The chain runs to 155 residues: Ribosome maturation factor RimP (155 aa).

Belongs to the RimP family.

The protein resides in the cytoplasm. Its function is as follows. Required for maturation of 30S ribosomal subunits. The sequence is that of Ribosome maturation factor RimP from Synechococcus sp. (strain RCC307).